Consider the following 376-residue polypeptide: MITAVNRPAALHINLAAIKENTRQAKAHLKPGQKLFCVVKANAYGHGAARLAPVMEEAGADGFCVAMLDEGLELRRAQIVKPILVLGLQPAEESALAAANDISLPVSSLDWLKKAEKVLRKEGLQLKIHLAIDSGMGRIGFSEDEDFKAVNEYLQGNDAFFVEGMFTHFASADSADASYFDYQVKRFKHMESLLTVKPKWIHVDNTAAILFDKDVASDIVRFGIGLYGLNPSSAPGSRDLEPAFALEPAMSFVSELTYVKQIHKGYGVGYGSTHIAEEDEWIGTVPVGYADGWIRKFQGFKVKVGDTYCPIVGRVCMDQFMVLLPKEVPAGTPVELISADPAAPNSLRRAADWLDTIHYEVACQFNDRLDRIYDNE.

Residue K40 is the Proton acceptor; specific for D-alanine of the active site. K40 is modified (N6-(pyridoxal phosphate)lysine). R138 serves as a coordination point for substrate. Residue Y270 is the Proton acceptor; specific for L-alanine of the active site. Position 317 (M317) interacts with substrate.

This sequence belongs to the alanine racemase family. Pyridoxal 5'-phosphate serves as cofactor.

The catalysed reaction is L-alanine = D-alanine. The protein operates within amino-acid biosynthesis; D-alanine biosynthesis; D-alanine from L-alanine: step 1/1. Catalyzes the interconversion of L-alanine and D-alanine. May also act on other amino acids. In Lactobacillus delbrueckii subsp. bulgaricus (strain ATCC BAA-365 / Lb-18), this protein is Alanine racemase (alr).